The following is a 55-amino-acid chain: Small ribosomal subunit protein eS31 (55 aa).

Zn(2+)-binding residues include C21, C24, C39, and C42. The C4-type zinc-finger motif lies at 21 to 42 (CPRCGPGVFLAEHADRFTCGRC).

Belongs to the eukaryotic ribosomal protein eS31 family. Part of the 30S ribosomal subunit. The cofactor is Zn(2+).

The protein is Small ribosomal subunit protein eS31 of Thermoplasma volcanium (strain ATCC 51530 / DSM 4299 / JCM 9571 / NBRC 15438 / GSS1).